The primary structure comprises 444 residues: ATP-dependent protease ATPase subunit HslU (444 aa).

Residues I20 and 62 to 67 each bind ATP; that span reads GVGKTE. The tract at residues 137–162 is disordered; sequence LVPPSRGTSGEPERGEDSNARQTFRK. D257, E322, and R394 together coordinate ATP.

The protein belongs to the ClpX chaperone family. HslU subfamily. A double ring-shaped homohexamer of HslV is capped on each side by a ring-shaped HslU homohexamer. The assembly of the HslU/HslV complex is dependent on binding of ATP.

It is found in the cytoplasm. ATPase subunit of a proteasome-like degradation complex; this subunit has chaperone activity. The binding of ATP and its subsequent hydrolysis by HslU are essential for unfolding of protein substrates subsequently hydrolyzed by HslV. HslU recognizes the N-terminal part of its protein substrates and unfolds these before they are guided to HslV for hydrolysis. The protein is ATP-dependent protease ATPase subunit HslU of Bordetella petrii (strain ATCC BAA-461 / DSM 12804 / CCUG 43448).